A 737-amino-acid chain; its full sequence is Probable beta-glucosidase L (737 aa).

Residues 1–19 (MRSLIRSGALNAFLAASLA) form the signal peptide. The N-linked (GlcNAc...) asparagine glycan is linked to N225. D253 is a catalytic residue. N-linked (GlcNAc...) asparagine glycosylation is found at N340, N365, and N608.

It belongs to the glycosyl hydrolase 3 family.

Its subcellular location is the secreted. It carries out the reaction Hydrolysis of terminal, non-reducing beta-D-glucosyl residues with release of beta-D-glucose.. The protein operates within glycan metabolism; cellulose degradation. In terms of biological role, beta-glucosidases are one of a number of cellulolytic enzymes involved in the degradation of cellulosic biomass. Catalyzes the last step releasing glucose from the inhibitory cellobiose. This is Probable beta-glucosidase L (bglL) from Emericella nidulans (strain FGSC A4 / ATCC 38163 / CBS 112.46 / NRRL 194 / M139) (Aspergillus nidulans).